We begin with the raw amino-acid sequence, 836 residues long: Translation initiation factor IF-2 (836 aa).

The interval 1–233 (MSDTDGKKPL…RSLAAMKRKQ (233 aa)) is disordered. The span at 18–27 (SGQVKQSFSH) shows a compositional bias: polar residues. Residues 50–60 (SGSSTTTSSPS) show a composition bias toward low complexity. The segment covering 88–156 (KLREVEDAKR…AARRAEEAKR (69 aa)) has biased composition (basic and acidic residues). Residues 167-176 (PAESRASAPP) show a composition bias toward low complexity. The segment covering 185 to 206 (SRKEREREADRDRTTKKDDSRR) has biased composition (basic and acidic residues). The region spanning 333-501 (PRPPIITIMG…NIALQAEILD (169 aa)) is the tr-type G domain. Residues 342 to 349 (GHVDHGKT) form a G1 region. 342–349 (GHVDHGKT) contributes to the GTP binding site. Residues 367-371 (GITQH) are G2. A G3 region spans residues 389-392 (DTPG). GTP is bound by residues 389–393 (DTPGH) and 443–446 (NKID). The tract at residues 443–446 (NKID) is G4. The G5 stretch occupies residues 479 to 481 (SAK).

It belongs to the TRAFAC class translation factor GTPase superfamily. Classic translation factor GTPase family. IF-2 subfamily.

Its subcellular location is the cytoplasm. Functionally, one of the essential components for the initiation of protein synthesis. Protects formylmethionyl-tRNA from spontaneous hydrolysis and promotes its binding to the 30S ribosomal subunits. Also involved in the hydrolysis of GTP during the formation of the 70S ribosomal complex. The polypeptide is Translation initiation factor IF-2 (Cereibacter sphaeroides (strain ATCC 17023 / DSM 158 / JCM 6121 / CCUG 31486 / LMG 2827 / NBRC 12203 / NCIMB 8253 / ATH 2.4.1.) (Rhodobacter sphaeroides)).